Consider the following 65-residue polypeptide: Large ribosomal subunit protein bL35 (65 aa).

Residues 1-22 are disordered; that stretch reads MPKMKTKSSAKKRFKVTGSGKI.

This sequence belongs to the bacterial ribosomal protein bL35 family.

The polypeptide is Large ribosomal subunit protein bL35 (Flavobacterium johnsoniae (strain ATCC 17061 / DSM 2064 / JCM 8514 / BCRC 14874 / CCUG 350202 / NBRC 14942 / NCIMB 11054 / UW101) (Cytophaga johnsonae)).